The primary structure comprises 117 residues: SPbeta prophage-derived uncharacterized protein YosL (117 aa).

The protein is SPbeta prophage-derived uncharacterized protein YosL (yosL) of Bacillus subtilis (strain 168).